Reading from the N-terminus, the 1187-residue chain is DNA-directed RNA polymerase subunit beta (1187 aa).

This sequence belongs to the RNA polymerase beta chain family. The RNAP catalytic core consists of 2 alpha, 1 beta, 1 beta' and 1 omega subunit. When a sigma factor is associated with the core the holoenzyme is formed, which can initiate transcription.

It catalyses the reaction RNA(n) + a ribonucleoside 5'-triphosphate = RNA(n+1) + diphosphate. Its function is as follows. DNA-dependent RNA polymerase catalyzes the transcription of DNA into RNA using the four ribonucleoside triphosphates as substrates. The sequence is that of DNA-directed RNA polymerase subunit beta from Streptococcus mutans serotype c (strain ATCC 700610 / UA159).